The following is a 382-amino-acid chain: MSTYTRPVMLLLCGLLLLTLAIAVLNTLVPLWLAQANLPTWQVGMVSSSYFTGNLVGTLFTGYLIKRIGFNRSYYLASLIFAAGCVGLGGMVGFWSWMSWRFIAGIGCAMIWVVVESALMCSGTSHNRGRLLAAYMMAYYMGTFLGQLLVSKVSGELLHVLPWVTGMILAGILPLLFTRIVNQQTQARHSSSISAMLKLRQARLGVNGCIISGIVLGSLYGLMPLYLKHQGMANASIGFWMAVLVSAGILGQWPMGRLADKFGRLLVLRVQVFVVILGSIAMLTQAAMAPALFILGAAGFTLYPVAMAWACEKVEHHQLVAMNQALLLSYTVGSLLGPSFAAMLMQNYSDNLLFIMIASVSFIYLLMLLRNAGQTPNPVAHI.

Helical transmembrane passes span 8–28 (VMLL…LNTL), 45–65 (MVSS…GYLI), 75–95 (YLAS…VGFW), 102–122 (FIAG…LMCS), 131–151 (LLAA…LLVS), 157–177 (LLHV…PLLF), 204–224 (LGVN…GLMP), 231–251 (GMAN…GILG), 270–290 (VQVF…AMAP), 291–311 (ALFI…AWAC), 325–345 (ALLL…AMLM), and 349–369 (SDNL…LMLL).

This sequence belongs to the major facilitator superfamily. YcaD (TC 2.A.1.26) family.

The protein localises to the cell inner membrane. This is an uncharacterized protein from Salmonella dublin (strain CT_02021853).